The following is a 566-amino-acid chain: Sister chromatid cohesion protein 1 (566 aa).

A Phosphoserine modification is found at Ser161. Ser175 is modified (phosphoserine; by CDC5). Lys210 bears the N6-acetyllysine; by ECO1 mark. Phosphoserine; by CDC5 is present on Ser263. Residue Ser307 is modified to Phosphoserine. The tract at residues 325 to 356 (SIQIDEETENSESIASSNTYKEERSNNLLTPQ) is disordered. Phosphothreonine is present on Thr354.

It belongs to the rad21 family. As to quaternary structure, interacts directly with IRR1/SCC3 in cohesin complex. Cohesin complexes are composed of the SMC1 and SMC3 heterodimer attached via their hinge domain, MCD1/SCC1 which link them, and IRR1, which interacts with MCD1. The cohesin complex also interacts with SCC2, which is required for its association with chromosomes. Cleaved by ESP1 at the onset of anaphase. In terms of processing, phosphorylated by CDC5/Polo-like kinase at the onset of anaphase. Phosphorylation takes places at proximity to cleavage sites and is required for an efficient cleavage by ESP1. Post-translationally, acetylated by ECO1.

It is found in the nucleus. Its subcellular location is the chromosome. The protein localises to the centromere. Its function is as follows. Cleavable component of the cohesin complex involved in chromosome cohesion during cell cycle. The cohesin complex is required for the cohesion of sister chromatids after DNA replication. The cohesin complex apparently forms a large proteinaceous ring within which sister chromatids can be trapped. At metaphase-anaphase transition, this protein is cleaved by ESP1 and dissociates from chromatin, allowing sister chromatids to segregate. The protein is Sister chromatid cohesion protein 1 (MCD1) of Saccharomyces cerevisiae (strain ATCC 204508 / S288c) (Baker's yeast).